Consider the following 355-residue polypeptide: UDP-N-acetylglucosamine--N-acetylmuramyl-(pentapeptide) pyrophosphoryl-undecaprenol N-acetylglucosamine transferase (355 aa).

Residues Thr14–Gly16, Asn126, Arg162, Ser190, Ile243, Ala262–Glu267, and Gln287 each bind UDP-N-acetyl-alpha-D-glucosamine.

This sequence belongs to the glycosyltransferase 28 family. MurG subfamily.

It localises to the cell inner membrane. It catalyses the reaction di-trans,octa-cis-undecaprenyl diphospho-N-acetyl-alpha-D-muramoyl-L-alanyl-D-glutamyl-meso-2,6-diaminopimeloyl-D-alanyl-D-alanine + UDP-N-acetyl-alpha-D-glucosamine = di-trans,octa-cis-undecaprenyl diphospho-[N-acetyl-alpha-D-glucosaminyl-(1-&gt;4)]-N-acetyl-alpha-D-muramoyl-L-alanyl-D-glutamyl-meso-2,6-diaminopimeloyl-D-alanyl-D-alanine + UDP + H(+). Its pathway is cell wall biogenesis; peptidoglycan biosynthesis. In terms of biological role, cell wall formation. Catalyzes the transfer of a GlcNAc subunit on undecaprenyl-pyrophosphoryl-MurNAc-pentapeptide (lipid intermediate I) to form undecaprenyl-pyrophosphoryl-MurNAc-(pentapeptide)GlcNAc (lipid intermediate II). The chain is UDP-N-acetylglucosamine--N-acetylmuramyl-(pentapeptide) pyrophosphoryl-undecaprenol N-acetylglucosamine transferase from Vibrio vulnificus (strain YJ016).